Here is a 466-residue protein sequence, read N- to C-terminus: Cysteine--tRNA ligase (466 aa).

Cys-29 lines the Zn(2+) pocket. A 'HIGH' region motif is present at residues 31–41 (ATVQAPPHIGH). Residues Cys-211, His-236, and Glu-240 each contribute to the Zn(2+) site. A 'KMSKS' region motif is present at residues 267–271 (KMSKS). Lys-270 is a binding site for ATP.

The protein belongs to the class-I aminoacyl-tRNA synthetase family. As to quaternary structure, monomer. Zn(2+) serves as cofactor.

The protein resides in the cytoplasm. The catalysed reaction is tRNA(Cys) + L-cysteine + ATP = L-cysteinyl-tRNA(Cys) + AMP + diphosphate. In Thermobifida fusca (strain YX), this protein is Cysteine--tRNA ligase.